A 379-amino-acid polypeptide reads, in one-letter code: Succinyl-diaminopimelate desuccinylase (379 aa).

His70 is a Zn(2+) binding site. The active site involves Asp72. Asp103 contacts Zn(2+). Residue Glu137 is the Proton acceptor of the active site. Residues Glu138, Glu166, and His352 each coordinate Zn(2+).

The protein belongs to the peptidase M20A family. DapE subfamily. In terms of assembly, homodimer. Zn(2+) serves as cofactor. Requires Co(2+) as cofactor.

The enzyme catalyses N-succinyl-(2S,6S)-2,6-diaminopimelate + H2O = (2S,6S)-2,6-diaminopimelate + succinate. The protein operates within amino-acid biosynthesis; L-lysine biosynthesis via DAP pathway; LL-2,6-diaminopimelate from (S)-tetrahydrodipicolinate (succinylase route): step 3/3. Catalyzes the hydrolysis of N-succinyl-L,L-diaminopimelic acid (SDAP), forming succinate and LL-2,6-diaminopimelate (DAP), an intermediate involved in the bacterial biosynthesis of lysine and meso-diaminopimelic acid, an essential component of bacterial cell walls. The protein is Succinyl-diaminopimelate desuccinylase of Shewanella baltica (strain OS223).